The chain runs to 458 residues: MVQISEVKGNSRDNRTAAHTHIKGLGLNSQGIAEKQASGFVGQTTAREACGVVVDLIKAHKMAGRGVLLAGGPGTGKTALALAISQELGTKIPFCPITGSEIYSTEVKKTEVLMENFRRAIGLKVRETKEVYEGEVTELTPEEAENPLGGYGKTITTLLIGLKSAKGQKKLRLDPSIYEAIQKERVTVGDVIYIEANTGACKRVGRSDAYATEFDLEAEEYVPIPKGEVHKKKEIVQDVSLHDLDVANARPQGGQDIMSMMGQLMKPKMTEITDKLRSEINKVVSKYIDQGVAELVPGVLFIDEAHMLDVECFTYLNKALESPISPIVVLASNRGMTGIRGAEDLVAAHGIPPDFLSRLLIIPTTAYDPEEIKRIVKIRSTTEGVKITEAAIDKIAEHGVRISLRYCLQLLTPASILAKVNGRNEIDVQDVAECEDLFLDARRSAALLSSEQGQEFIC.

Position 71–78 (71–78 (GGPGTGKT)) interacts with ATP.

Belongs to the RuvB family. In terms of assembly, may form heterododecamers with hel-2/rvb2. Component of the SWR1 chromatin remodeling complex, the INO80 chromatin remodeling complex, and of the R2TP complex.

It is found in the nucleus. It carries out the reaction ATP + H2O = ADP + phosphate + H(+). Functionally, DNA helicase which participates in several chromatin remodeling complexes, including the SWR1 and the INO80 complexes. The SWR1 complex mediates the ATP-dependent exchange of histone H2A for the H2A variant H2A.Z leading to transcriptional regulation of selected genes by chromatin remodeling. The INO80 complex remodels chromatin by shifting nucleosomes and is involved in DNA repair. Also involved in pre-rRNA processing. This is RuvB-like helicase 1 (hel-1) from Neurospora crassa (strain ATCC 24698 / 74-OR23-1A / CBS 708.71 / DSM 1257 / FGSC 987).